The following is a 205-amino-acid chain: Meiotic nuclear division protein 1 homolog (205 aa).

Ser2 bears the N-acetylserine mark. Residues 83–173 (KRKLEVLDSQ…EAANRWTDNI (91 aa)) adopt a coiled-coil conformation.

This sequence belongs to the MND1 family. Heterodimer with PSMC3IP/HOP2. MND1-PSMC3IP interacts with DMC1 and RAD51 and binds preferentially to dsDNA.

It localises to the nucleus. Its function is as follows. Required for proper homologous chromosome pairing and efficient cross-over and intragenic recombination during meiosis. Stimulates both DMC1- and RAD51-mediated homologous strand assimilation, which is required for the resolution of meiotic double-strand breaks. This Bos taurus (Bovine) protein is Meiotic nuclear division protein 1 homolog.